We begin with the raw amino-acid sequence, 103 residues long: Large ribosomal subunit protein bL21 (103 aa).

This sequence belongs to the bacterial ribosomal protein bL21 family. Part of the 50S ribosomal subunit. Contacts protein L20.

In terms of biological role, this protein binds to 23S rRNA in the presence of protein L20. The protein is Large ribosomal subunit protein bL21 of Borreliella afzelii (strain PKo) (Borrelia afzelii).